The following is a 199-amino-acid chain: Recombination protein RecR (199 aa).

The C4-type zinc-finger motif lies at 56–71 (CATCGNVAQEELCNIC). The region spanning 79–174 (SVICVVEEPK…KVTRLASGLP (96 aa)) is the Toprim domain.

Belongs to the RecR family.

Its function is as follows. May play a role in DNA repair. It seems to be involved in an RecBC-independent recombinational process of DNA repair. It may act with RecF and RecO. This Streptomyces avermitilis (strain ATCC 31267 / DSM 46492 / JCM 5070 / NBRC 14893 / NCIMB 12804 / NRRL 8165 / MA-4680) protein is Recombination protein RecR.